We begin with the raw amino-acid sequence, 489 residues long: N-succinylglutamate 5-semialdehyde dehydrogenase (489 aa).

Residue 224–229 (GSAKVG) coordinates NAD(+). Catalysis depends on residues Glu-247 and Cys-281.

This sequence belongs to the aldehyde dehydrogenase family. AstD subfamily.

It catalyses the reaction N-succinyl-L-glutamate 5-semialdehyde + NAD(+) + H2O = N-succinyl-L-glutamate + NADH + 2 H(+). It participates in amino-acid degradation; L-arginine degradation via AST pathway; L-glutamate and succinate from L-arginine: step 4/5. Its function is as follows. Catalyzes the NAD-dependent reduction of succinylglutamate semialdehyde into succinylglutamate. The protein is N-succinylglutamate 5-semialdehyde dehydrogenase of Chromohalobacter salexigens (strain ATCC BAA-138 / DSM 3043 / CIP 106854 / NCIMB 13768 / 1H11).